Consider the following 185-residue polypeptide: Ribosome-recycling factor (185 aa).

This sequence belongs to the RRF family.

The protein resides in the cytoplasm. Responsible for the release of ribosomes from messenger RNA at the termination of protein biosynthesis. May increase the efficiency of translation by recycling ribosomes from one round of translation to another. In Streptomyces avermitilis (strain ATCC 31267 / DSM 46492 / JCM 5070 / NBRC 14893 / NCIMB 12804 / NRRL 8165 / MA-4680), this protein is Ribosome-recycling factor.